We begin with the raw amino-acid sequence, 899 residues long: Nuclear factor NF-kappa-B p100 subunit (899 aa).

Residues Ser23 and Ser161 each carry the phosphoserine modification. Positions 35–224 (ADGPYLVIVE…QPIHDSKSPG (190 aa)) constitute an RHD domain. Residues 337-341 (RKRRK) carry the Nuclear localization signal motif. Residues 346 to 377 (FSQPFGGGSHMGGGSGGSAGGYGGAGGGGSLG) form a GRR region. The tract at residues 403–434 (GGAQMAGSRRDTDAGEGAEEPRTPPEAPQGEP) is disordered. Basic and acidic residues predominate over residues 410-425 (SRRDTDAGEGAEEPRT). Position 425 is a phosphothreonine (Thr425). ANK repeat units lie at residues 487–516 (NGDT…HAQY), 526–555 (LHQT…DPTL), 559–590 (HGDS…HAVP), 599–628 (EGLY…EVEA), 633–663 (GGRT…NVNA), and 667–696 (AGNT…DIHA). Residues 698 to 734 (NEEPLCPLPSPSTSGSDSDSEGPERDTQRNFRGHTPL) are disordered. A phosphoserine mark is found at Ser713, Ser715, and Ser717. One copy of the ANK 7 repeat lies at 729-755 (RGHTPLDLTCSTKVKTLLLNAAQNTTE). In terms of domain architecture, Death spans 764–851 (AGPGLSLGDA…EGVRLLKGPE (88 aa)). A Phosphoserine modification is found at Ser812. Residues 851-865 (ETRDKLPSTEVKEDS) are compositionally biased toward basic and acidic residues. The interval 851–899 (ETRDKLPSTEVKEDSAYGSQSVEQEAEKLCPPPEPPGGLCHGHPQPQVH) is disordered. Lys855 is covalently cross-linked (Glycyl lysine isopeptide (Lys-Gly) (interchain with G-Cter in ubiquitin)). A phosphoserine; by MAP3K14 mark is found at Ser865 and Ser869. The segment covering 887-899 (GGLCHGHPQPQVH) has biased composition (low complexity).

As to quaternary structure, component of the NF-kappa-B RelB-p52 complex. Homodimer; component of the NF-kappa-B p52-p52 complex. Component of the NF-kappa-B p65-p52 complex. Component of the NF-kappa-B p52-c-Rel complex. NFKB2/p52 interacts with NFKBIE. Component of a complex consisting of the NF-kappa-B p50-p50 homodimer and BCL3. Directly interacts with MEN1. While translation occurs, the particular unfolded structure after the GRR repeat promotes the generation of p52 making it an acceptable substrate for the proteasome. This process is known as cotranslational processing. The processed form is active and the unprocessed form acts as an inhibitor (I kappa B-like), being able to form cytosolic complexes with NF-kappa B, trapping it in the cytoplasm. Complete folding of the region downstream of the GRR repeat precludes processing. In terms of processing, subsequent to MAP3K14-dependent serine phosphorylation, p100 polyubiquitination occurs then triggering its proteasome-dependent processing. Post-translationally, constitutive processing is tightly suppressed by its C-terminal processing inhibitory domain, named PID, which contains the death domain. Ubiquitinated by TRIM55; leading to processing by VCP and subsequent ubiquitin-dependent protein degradation by the proteasome. In terms of tissue distribution, highly expressed in lymph nodes and thymus.

It is found in the nucleus. It localises to the cytoplasm. Functionally, NF-kappa-B is a pleiotropic transcription factor present in almost all cell types and is the endpoint of a series of signal transduction events that are initiated by a vast array of stimuli related to many biological processes such as inflammation, immunity, differentiation, cell growth, tumorigenesis and apoptosis. NF-kappa-B is a homo- or heterodimeric complex formed by the Rel-like domain-containing proteins RELA/p65, RELB, NFKB1/p105, NFKB1/p50, REL and NFKB2/p52. The dimers bind at kappa-B sites in the DNA of their target genes and the individual dimers have distinct preferences for different kappa-B sites that they can bind with distinguishable affinity and specificity. Different dimer combinations act as transcriptional activators or repressors, respectively. NF-kappa-B is controlled by various mechanisms of post-translational modification and subcellular compartmentalization as well as by interactions with other cofactors or corepressors. NF-kappa-B complexes are held in the cytoplasm in an inactive state complexed with members of the NF-kappa-B inhibitor (I-kappa-B) family. In a conventional activation pathway, I-kappa-B is phosphorylated by I-kappa-B kinases (IKKs) in response to different activators, subsequently degraded thus liberating the active NF-kappa-B complex which translocates to the nucleus. In a non-canonical activation pathway, the MAP3K14-activated CHUK/IKKA homodimer phosphorylates NFKB2/p100 associated with RelB, inducing its proteolytic processing to NFKB2/p52 and the formation of NF-kappa-B RelB-p52 complexes. The NF-kappa-B heterodimeric RelB-p52 complex is a transcriptional activator. The NF-kappa-B p52-p52 homodimer is a transcriptional repressor. NFKB2 appears to have dual functions such as cytoplasmic retention of attached NF-kappa-B proteins by p100 and generation of p52 by a cotranslational processing. The proteasome-mediated process ensures the production of both p52 and p100 and preserves their independent function. p52 binds to the kappa-B consensus sequence 5'-GGRNNYYCC-3', located in the enhancer region of genes involved in immune response and acute phase reactions. p52 and p100 are respectively the minor and major form; the processing of p100 being relatively poor. Isoform p49 is a subunit of the NF-kappa-B protein complex, which stimulates the HIV enhancer in synergy with p65. In concert with RELB, regulates the circadian clock by repressing the transcriptional activator activity of the CLOCK-BMAL1 heterodimer. The sequence is that of Nuclear factor NF-kappa-B p100 subunit (Nfkb2) from Mus musculus (Mouse).